The sequence spans 491 residues: Aspartyl/glutamyl-tRNA(Asn/Gln) amidotransferase subunit B (491 aa).

It belongs to the GatB/GatE family. GatB subfamily. As to quaternary structure, heterotrimer of A, B and C subunits.

It carries out the reaction L-glutamyl-tRNA(Gln) + L-glutamine + ATP + H2O = L-glutaminyl-tRNA(Gln) + L-glutamate + ADP + phosphate + H(+). The enzyme catalyses L-aspartyl-tRNA(Asn) + L-glutamine + ATP + H2O = L-asparaginyl-tRNA(Asn) + L-glutamate + ADP + phosphate + 2 H(+). In terms of biological role, allows the formation of correctly charged Asn-tRNA(Asn) or Gln-tRNA(Gln) through the transamidation of misacylated Asp-tRNA(Asn) or Glu-tRNA(Gln) in organisms which lack either or both of asparaginyl-tRNA or glutaminyl-tRNA synthetases. The reaction takes place in the presence of glutamine and ATP through an activated phospho-Asp-tRNA(Asn) or phospho-Glu-tRNA(Gln). The polypeptide is Aspartyl/glutamyl-tRNA(Asn/Gln) amidotransferase subunit B (Paraburkholderia xenovorans (strain LB400)).